Reading from the N-terminus, the 264-residue chain is Glutamate racemase (264 aa).

Substrate contacts are provided by residues 10-11 and 42-43; these read DS and YG. The active-site Proton donor/acceptor is the Cys73. Residue 74–75 participates in substrate binding; it reads NT. Residue Cys183 is the Proton donor/acceptor of the active site. 184 to 185 contacts substrate; sequence TH.

This sequence belongs to the aspartate/glutamate racemases family.

The enzyme catalyses L-glutamate = D-glutamate. It participates in cell wall biogenesis; peptidoglycan biosynthesis. Provides the (R)-glutamate required for cell wall biosynthesis. This is Glutamate racemase from Streptococcus pyogenes serotype M4 (strain MGAS10750).